Here is a 214-residue protein sequence, read N- to C-terminus: Thiamine-phosphate synthase (214 aa).

4-amino-2-methyl-5-(diphosphooxymethyl)pyrimidine-binding positions include 37-41 (QYREK) and N73. Mg(2+)-binding residues include D74 and D93. S112 is a 4-amino-2-methyl-5-(diphosphooxymethyl)pyrimidine binding site. 139–141 (TIS) is a binding site for 2-[(2R,5Z)-2-carboxy-4-methylthiazol-5(2H)-ylidene]ethyl phosphate. K142 is a binding site for 4-amino-2-methyl-5-(diphosphooxymethyl)pyrimidine. Residues G171 and 191–192 (IS) contribute to the 2-[(2R,5Z)-2-carboxy-4-methylthiazol-5(2H)-ylidene]ethyl phosphate site.

Belongs to the thiamine-phosphate synthase family. Requires Mg(2+) as cofactor.

It catalyses the reaction 2-[(2R,5Z)-2-carboxy-4-methylthiazol-5(2H)-ylidene]ethyl phosphate + 4-amino-2-methyl-5-(diphosphooxymethyl)pyrimidine + 2 H(+) = thiamine phosphate + CO2 + diphosphate. The catalysed reaction is 2-(2-carboxy-4-methylthiazol-5-yl)ethyl phosphate + 4-amino-2-methyl-5-(diphosphooxymethyl)pyrimidine + 2 H(+) = thiamine phosphate + CO2 + diphosphate. The enzyme catalyses 4-methyl-5-(2-phosphooxyethyl)-thiazole + 4-amino-2-methyl-5-(diphosphooxymethyl)pyrimidine + H(+) = thiamine phosphate + diphosphate. The protein operates within cofactor biosynthesis; thiamine diphosphate biosynthesis; thiamine phosphate from 4-amino-2-methyl-5-diphosphomethylpyrimidine and 4-methyl-5-(2-phosphoethyl)-thiazole: step 1/1. In terms of biological role, condenses 4-methyl-5-(beta-hydroxyethyl)thiazole monophosphate (THZ-P) and 2-methyl-4-amino-5-hydroxymethyl pyrimidine pyrophosphate (HMP-PP) to form thiamine monophosphate (TMP). The protein is Thiamine-phosphate synthase of Listeria monocytogenes serotype 4b (strain F2365).